Consider the following 601-residue polypeptide: Elongation factor 4 (601 aa).

A tr-type G domain is found at 6 to 188 (SHIRNFSIIA…QIVHRVPPPE (183 aa)). GTP contacts are provided by residues 18-23 (DHGKST) and 135-138 (NKID).

Belongs to the TRAFAC class translation factor GTPase superfamily. Classic translation factor GTPase family. LepA subfamily.

The protein localises to the cell inner membrane. It catalyses the reaction GTP + H2O = GDP + phosphate + H(+). In terms of biological role, required for accurate and efficient protein synthesis under certain stress conditions. May act as a fidelity factor of the translation reaction, by catalyzing a one-codon backward translocation of tRNAs on improperly translocated ribosomes. Back-translocation proceeds from a post-translocation (POST) complex to a pre-translocation (PRE) complex, thus giving elongation factor G a second chance to translocate the tRNAs correctly. Binds to ribosomes in a GTP-dependent manner. This is Elongation factor 4 from Anaeromyxobacter dehalogenans (strain 2CP-C).